Consider the following 358-residue polypeptide: Pre-mRNA-splicing factor spp2 (358 aa).

Disordered regions lie at residues 1–250 and 298–358; these read MTDQ…RAVP and AWNQ…RGDR. The segment covering 24 to 40 has biased composition (basic residues); that stretch reads KTKKPSRPTHTRRHHAR. Basic and acidic residues-rich tracts occupy residues 80–137 and 145–160; these read LENR…DASR and RSRD…KDLQ. Positions 174 to 185 are enriched in polar residues; the sequence is NPKSTTTATSSF. Basic and acidic residues-rich tracts occupy residues 233–246 and 309–358; these read SSHD…HSDY and GDSR…RGDR.

The protein belongs to the SPP2 family. In terms of assembly, associated with the spliceosome.

It localises to the nucleus. Functionally, involved in spliceosome maturation and the first step of pre-mRNA splicing. The sequence is that of Pre-mRNA-splicing factor spp2 (msp-40) from Neurospora crassa (strain ATCC 24698 / 74-OR23-1A / CBS 708.71 / DSM 1257 / FGSC 987).